Reading from the N-terminus, the 1846-residue chain is Peripheral-type benzodiazepine receptor-associated protein 1 (1846 aa).

Disordered regions lie at residues 57-97 (EESS…GYSC), 281-318 (NQRE…DDVE), and 560-628 (GPKD…SEVE). Over residues 576-587 (PKSSEPALTTLT) the composition is skewed to polar residues. Residues 599–612 (SLSNSSRSESIHNS) show a composition bias toward low complexity. An SH3 1 domain is found at 649–716 (ARIQVFLARY…PSNFVERVSD (68 aa)). The interval 726-785 (ELADSSHSSGPELSFLSGGGGGCSSGGQSSGGRSQPRPEEEAAGDELSLSPPPEGLGEPL) is disordered. Residues 742-755 (SGGGGGCSSGGQSS) are compositionally biased toward gly residues. Fibronectin type-III domains are found at residues 787-878 (VPYP…AGAG), 880-972 (VPSQ…TLPA), and 977-1075 (APLD…PALA). 7 disordered regions span residues 1084 to 1107 (SCLS…GLGD), 1163 to 1219 (EPTL…LDSG), 1243 to 1302 (HSRN…SDEE), 1322 to 1476 (SIPE…PESS), 1492 to 1617 (YDSE…QDLP), 1704 to 1755 (LTEA…AAQK), and 1812 to 1846 (VPSN…RVQC). Basic and acidic residues predominate over residues 1202 to 1219 (TQKKPSIEACHGGDLDSG). The segment covering 1251-1265 (DIQEEEEEEEEEEEE) has biased composition (acidic residues). A compositionally biased stretch (polar residues) spans 1270–1283 (PCSSQKQVAGNSIR). Residues 1324 to 1335 (PEEEEEEEEEEG) show a composition bias toward acidic residues. 2 stretches are compositionally biased toward basic and acidic residues: residues 1411–1420 (RPQDPREHCS) and 1545–1577 (AWEK…ESRG). The SH3 2 domain maps to 1616 to 1684 (LPVRVFVALF…PCNMVAEVAV (69 aa)). Over residues 1705 to 1719 (TEASGNGPSVYSSAH) the composition is skewed to polar residues. Residues 1755-1822 (KTSRPMVAAF…PSNFLEGPGP (68 aa)) form the SH3 3 domain. Residues 1817–1830 (LEGPGPESGSLESG) show a composition bias toward low complexity.

Belongs to the RIMBP family. In terms of assembly, interacts with RIMS1 and RIMS2. Interacts with TSPO. Interacts with CACNA1A. Predominantly expressed in the brain.

It is found in the cytoplasm. The protein localises to the mitochondrion. Its function is as follows. Required for synaptic transmission regulation. It probably controls the recruitement of voltage-gated calcium channels to the presynaptic membrane, and modulates neurotransmitter release. The polypeptide is Peripheral-type benzodiazepine receptor-associated protein 1 (Mus musculus (Mouse)).